Reading from the N-terminus, the 163-residue chain is Crossover junction endodeoxyribonuclease RuvC (163 aa).

Residues Asp9, Glu76, and Asp148 contribute to the active site. Asp9, Glu76, and Asp148 together coordinate Mg(2+).

It belongs to the RuvC family. Homodimer which binds Holliday junction (HJ) DNA. The HJ becomes 2-fold symmetrical on binding to RuvC with unstacked arms; it has a different conformation from HJ DNA in complex with RuvA. In the full resolvosome a probable DNA-RuvA(4)-RuvB(12)-RuvC(2) complex forms which resolves the HJ. Requires Mg(2+) as cofactor.

It is found in the cytoplasm. The catalysed reaction is Endonucleolytic cleavage at a junction such as a reciprocal single-stranded crossover between two homologous DNA duplexes (Holliday junction).. Functionally, the RuvA-RuvB-RuvC complex processes Holliday junction (HJ) DNA during genetic recombination and DNA repair. Endonuclease that resolves HJ intermediates. Cleaves cruciform DNA by making single-stranded nicks across the HJ at symmetrical positions within the homologous arms, yielding a 5'-phosphate and a 3'-hydroxyl group; requires a central core of homology in the junction. The consensus cleavage sequence is 5'-(A/T)TT(C/G)-3'. Cleavage occurs on the 3'-side of the TT dinucleotide at the point of strand exchange. HJ branch migration catalyzed by RuvA-RuvB allows RuvC to scan DNA until it finds its consensus sequence, where it cleaves and resolves the cruciform DNA. The protein is Crossover junction endodeoxyribonuclease RuvC of Trichodesmium erythraeum (strain IMS101).